The chain runs to 831 residues: DNA ligase (831 aa).

NAD(+)-binding positions include D34–D38, S83–L84, and E114. K116 serves as the catalytic N6-AMP-lysine intermediate. NAD(+) contacts are provided by R137, E174, K291, and K315. C409, C412, C427, and C433 together coordinate Zn(2+). Positions A749–Q831 constitute a BRCT domain.

This sequence belongs to the NAD-dependent DNA ligase family. LigA subfamily. It depends on Mg(2+) as a cofactor. Requires Mn(2+) as cofactor.

It catalyses the reaction NAD(+) + (deoxyribonucleotide)n-3'-hydroxyl + 5'-phospho-(deoxyribonucleotide)m = (deoxyribonucleotide)n+m + AMP + beta-nicotinamide D-nucleotide.. In terms of biological role, DNA ligase that catalyzes the formation of phosphodiester linkages between 5'-phosphoryl and 3'-hydroxyl groups in double-stranded DNA using NAD as a coenzyme and as the energy source for the reaction. It is essential for DNA replication and repair of damaged DNA. The protein is DNA ligase of Xylella fastidiosa (strain M23).